The sequence spans 751 residues: Probable alpha-galactosidase C (751 aa).

The first 27 residues, 1-27, serve as a signal peptide directing secretion; that stretch reads MFGSPKRAALAAASLLAVFGNGPSVMA. N-linked (GlcNAc...) asparagine glycans are attached at residues Asn-49, Asn-57, Asn-162, Asn-186, Asn-194, Asn-366, Asn-433, Asn-452, and Asn-500. Asp-510 (nucleophile) is an active-site residue. Asp-572 serves as the catalytic Proton donor. A glycan (N-linked (GlcNAc...) asparagine) is linked at Asn-720.

This sequence belongs to the glycosyl hydrolase 36 family. Homotetramer. Requires Mg(2+) as cofactor. NAD(+) is required as a cofactor.

Its subcellular location is the secreted. The catalysed reaction is Hydrolysis of terminal, non-reducing alpha-D-galactose residues in alpha-D-galactosides, including galactose oligosaccharides, galactomannans and galactolipids.. Hydrolyzes a variety of simple alpha-D-galactoside as well as more complex molecules such as oligosaccharides and polysaccharides. The sequence is that of Probable alpha-galactosidase C (aglC) from Aspergillus oryzae (strain ATCC 42149 / RIB 40) (Yellow koji mold).